Reading from the N-terminus, the 126-residue chain is Glycine cleavage system H protein (126 aa).

Positions 23–104 (TLTVGITDHA…PYESWLFKIK (82 aa)) constitute a Lipoyl-binding domain. At Lys64 the chain carries N6-lipoyllysine.

Belongs to the GcvH family. In terms of assembly, the glycine cleavage system is composed of four proteins: P, T, L and H. (R)-lipoate is required as a cofactor.

The glycine cleavage system catalyzes the degradation of glycine. The H protein shuttles the methylamine group of glycine from the P protein to the T protein. This chain is Glycine cleavage system H protein, found in Paraburkholderia xenovorans (strain LB400).